Here is a 466-residue protein sequence, read N- to C-terminus: Gamma-glutamylpolyamine synthetase GlnA3 (466 aa).

One can recognise a GS catalytic domain in the interval 127–466 (GRTVLRRIVA…GVAAAYRWKY (340 aa)). Positions 151 and 153 each coordinate Mg(2+). Glu-202 contacts ATP. Positions 207 and 214 each coordinate Mg(2+). Gly-259 contributes to the L-glutamate binding site. His-263 provides a ligand contact to Mg(2+). Residue Ser-267 participates in ATP binding. The L-glutamate site is built by Arg-316 and Arg-334. ATP is bound by residues Arg-334 and Arg-339. Glu-355 lines the Mg(2+) pocket.

The protein belongs to the glutamine synthetase family. The cofactor is Mg(2+). Expressed in mycelium.

It carries out the reaction spermine + L-glutamate + ATP = gamma-L-glutamylspermine + ADP + phosphate + H(+). The enzyme catalyses spermidine + L-glutamate + ATP = gamma-L-glutamylspermidine + ADP + phosphate + H(+). The catalysed reaction is putrescine + L-glutamate + ATP = gamma-L-glutamylputrescine + ADP + phosphate + H(+). It catalyses the reaction cadaverine + L-glutamate + ATP = gamma-L-glutamylcadaverine + ADP + phosphate + H(+). It functions in the pathway amine and polyamine degradation; putrescine degradation. The protein operates within amine and polyamine degradation; spermidine degradation. It participates in amine and polyamine degradation; spermine degradation. Its function is as follows. Involved in the catabolism of polyamines. Catalyzes the ATP-dependent gamma-glutamylation of polyamines. Substrates include putrescine, cadaverine, spermidine and spermine, with a preference for long-chain polyamines spermidine and spermine. Is not able to compensate for the loss of glutamine synthetases (GSs). No complementation of the L-glutamine auxotrophy of an E.coli glnA mutant. Involved in morphological differentiation and in the production of secondary metabolites. Together with GlnA2, enables survival of S.coelicolor under exposure to high local environmental polyamine concentrations, which is toxic to the cells. The chain is Gamma-glutamylpolyamine synthetase GlnA3 from Streptomyces coelicolor (strain ATCC BAA-471 / A3(2) / M145).